An 85-amino-acid polypeptide reads, in one-letter code: Small ribosomal subunit protein bS16c (85 aa).

It belongs to the bacterial ribosomal protein bS16 family.

It is found in the plastid. It localises to the chloroplast. The protein is Small ribosomal subunit protein bS16c of Cucumis sativus (Cucumber).